The following is a 1069-amino-acid chain: Receptor-type guanylate cyclase gcy-29 (1069 aa).

The signal sequence occupies residues 1-23 (MLPNFWNFQFIFVIFCWIPIVVS). The Extracellular segment spans residues 24–458 (DEKIVLKIGS…FREENCDYTQ (435 aa)). N-linked (GlcNAc...) asparagine glycans are attached at residues N161, N240, and N407. The helical transmembrane segment at 459-479 (TIVIATAVVCIILTVFLGIWL) threads the bilayer. Topologically, residues 480 to 1069 (RRACETSALD…FKKKNNTFDF (590 aa)) are cytoplasmic. One can recognise a Protein kinase domain in the interval 497–806 (RDDVQILDEE…RVRLATEIAL (310 aa)). ATP-binding positions include 503 to 511 (LDEEQVKSV) and K527. In terms of domain architecture, Guanylate cyclase spans 876–1006 (TVMFSDIVGF…ETVNIAAVME (131 aa)). Mg(2+) is bound by residues D881, I882, and D925.

This sequence belongs to the adenylyl cyclase class-4/guanylyl cyclase family. Expressed bilaterally in ASE and AFD sensory neurons.

The protein resides in the cell membrane. It carries out the reaction GTP = 3',5'-cyclic GMP + diphosphate. In terms of biological role, guanylate cyclase involved in the production of the second messenger cGMP. The protein is Receptor-type guanylate cyclase gcy-29 of Caenorhabditis elegans.